The chain runs to 299 residues: HTH-type transcriptional regulator PgrR (299 aa).

The HTH lysR-type domain maps to 4–61 (EEIADLMAFVVVAEERSFTRAAARLSMAQSALSQIVRRIEERLGLRLLTRTTRSVVPT). A DNA-binding region (H-T-H motif) is located at residues 21–40 (FTRAAARLSMAQSALSQIVR).

The protein belongs to the LysR transcriptional regulatory family.

Regulates the expression of genes involved in peptidoglycan (PG) degradation. Could play a role in switch control between recycling and degradation of PG peptides. Negatively regulates the expression of the ycjY-ymjD-ymjC-mpaA operon by binding to the PgrR-box. In addition, other genes are predicted to be under the control of PgrR, including genes related to membrane formation and function. This chain is HTH-type transcriptional regulator PgrR (pgrR), found in Escherichia coli (strain K12).